Consider the following 266-residue polypeptide: Aspartate/glutamate leucyltransferase (266 aa).

The protein belongs to the R-transferase family. Bpt subfamily.

It localises to the cytoplasm. The enzyme catalyses N-terminal L-glutamyl-[protein] + L-leucyl-tRNA(Leu) = N-terminal L-leucyl-L-glutamyl-[protein] + tRNA(Leu) + H(+). It catalyses the reaction N-terminal L-aspartyl-[protein] + L-leucyl-tRNA(Leu) = N-terminal L-leucyl-L-aspartyl-[protein] + tRNA(Leu) + H(+). Its function is as follows. Functions in the N-end rule pathway of protein degradation where it conjugates Leu from its aminoacyl-tRNA to the N-termini of proteins containing an N-terminal aspartate or glutamate. The sequence is that of Aspartate/glutamate leucyltransferase from Rhizorhabdus wittichii (strain DSM 6014 / CCUG 31198 / JCM 15750 / NBRC 105917 / EY 4224 / RW1) (Sphingomonas wittichii).